Reading from the N-terminus, the 295-residue chain is Iron-sulfur cluster carrier protein (295 aa).

38–45 (GKGGVGKS) lines the ATP pocket.

The protein belongs to the Mrp/NBP35 ATP-binding proteins family. As to quaternary structure, homodimer.

Its function is as follows. Binds and transfers iron-sulfur (Fe-S) clusters to target apoproteins. Can hydrolyze ATP. This chain is Iron-sulfur cluster carrier protein, found in Pyrococcus horikoshii (strain ATCC 700860 / DSM 12428 / JCM 9974 / NBRC 100139 / OT-3).